A 417-amino-acid polypeptide reads, in one-letter code: MLYLEDYLEMIEQLPMDLRDRFTEMREMDLQVQNAMDQLEQRVNEFFMNAKKNKPEWREEQMTSIKKDYYKALEDADEKVQLANQIYDLVDRHLRKLDQELAKFKMELEADNAGITEILERRSLELDTPSQPVNNHHAHSHTPVEKRKHNPSSHHGATDHVPEKKFKSEALLSTLTSDASKENTPGRRNNNSSSSSNNAYNTNSSQPLASYNLGSLSSGSGAGAITMAAAQAVQATAQMKEGRRTSSLKASYEAFKNNDFQLGREFSLSRDSTGYSSSALASTLTQTLSSSSTDSRSGRKSKNNNKSSSQQSSSSSSSSSLSSCSSSSALAQELSQQTAVIPESDSNSQVDWTYDPNEPRYCICNQVSYGEMVGCDNQDCPIEWFHYGCVGLTEAPKGKWYCPQCTAAMKRRGSRHK.

Disordered stretches follow at residues 128–203 and 286–320; these read TPSQ…YNTN and QTLSSSSTDSRSGRKSKNNNKSSSQQSSSSSSSSS. Basic residues predominate over residues 136–152; it reads HHAHSHTPVEKRKHNPS. Positions 156–168 are enriched in basic and acidic residues; that stretch reads GATDHVPEKKFKS. 3 stretches are compositionally biased toward low complexity: residues 189 to 203, 286 to 295, and 307 to 320; these read NNNSSSSSNNAYNTN, QTLSSSSTDS, and SSSQQSSSSSSSSS. Residues 359 to 408 form a PHD-type zinc finger; that stretch reads PRYCICNQVSYGEMVGCDNQDCPIEWFHYGCVGLTEAPKGKWYCPQCTAA. Zn(2+) is bound by residues C362, C364, C375, C380, H386, C389, C402, and C405.

It belongs to the ING family. In terms of assembly, interacts with H3K4me3 and to a lesser extent with H3K4me2. Component of the NuA4 histone acetyltransferase complex.

Its subcellular location is the nucleus. In terms of biological role, component of the NuA4 histone acetyltransferase (HAT) complex which is involved in transcriptional activation of select genes principally by acetylation of nucleosomal histone H4 and H2A. This modification may both alter nucleosome - DNA interactions and promote interaction of the modified histones with other proteins which positively regulate transcription. NuA4 may also play a direct role in DNA repair when directly recruited to sites of DNA damage. In Gallus gallus (Chicken), this protein is Inhibitor of growth protein 3 (ING3).